We begin with the raw amino-acid sequence, 139 residues long: uncharacterized protein (139 aa).

This is an uncharacterized protein from Dryophytes versicolor (chameleon treefrog).